A 238-amino-acid polypeptide reads, in one-letter code: Probable transcriptional regulatory protein TC_0742 (238 aa).

A disordered region spans residues 1-21; the sequence is MAGHSKWANTKHRKERADHKK. The span at 9–21 shows a compositional bias: basic residues; it reads NTKHRKERADHKK.

It belongs to the TACO1 family.

It localises to the cytoplasm. This chain is Probable transcriptional regulatory protein TC_0742, found in Chlamydia muridarum (strain MoPn / Nigg).